A 532-amino-acid polypeptide reads, in one-letter code: Optineurin (532 aa).

Coiled-coil stretches lie at residues Ser27–Gly143 and Glu195–Met466. The segment at Gln502–Thr532 adopts a CCHC NOA-type zinc-finger fold. Zn(2+) contacts are provided by Cys510, Cys513, His526, and Cys530.

Its subcellular location is the cytoplasm. It is found in the perinuclear region. The protein resides in the golgi apparatus. The protein localises to the trans-Golgi network. It localises to the cytoplasmic vesicle. Its subcellular location is the recycling endosome. It is found in the autophagosome. Its function is as follows. Probably part of the TNF-alpha signaling pathway that can shift the equilibrium toward induction of cell death. May act by regulating membrane trafficking and cellular morphogenesis. The protein is Optineurin (optn) of Xenopus laevis (African clawed frog).